Here is a 506-residue protein sequence, read N- to C-terminus: Galactose/methyl galactoside import ATP-binding protein MglA (506 aa).

ABC transporter domains follow at residues 14 to 249 and 264 to 506; these read LEMK…VGRS and VMLE…SLYL. 46–53 serves as a coordination point for ATP; sequence GENGAGKS.

It belongs to the ABC transporter superfamily. Galactose/methyl galactoside importer (TC 3.A.1.2.3) family. As to quaternary structure, the complex is composed of one ATP-binding protein (MglA), two transmembrane proteins (MglC) and a solute-binding protein (MglB).

Its subcellular location is the cell inner membrane. It catalyses the reaction D-galactose(out) + ATP + H2O = D-galactose(in) + ADP + phosphate + H(+). The catalysed reaction is methyl beta-D-galactoside(out) + ATP + H2O = methyl beta-D-galactoside(in) + ADP + phosphate + H(+). Its function is as follows. Part of the ABC transporter complex MglABC involved in galactose/methyl galactoside import. Responsible for energy coupling to the transport system. The polypeptide is Galactose/methyl galactoside import ATP-binding protein MglA (Sodalis glossinidius (strain morsitans)).